The primary structure comprises 638 residues: Nucleolar protein 58 (638 aa).

A Nop domain is found at 284-402 (IAPNLTILVG…VDRRAAAIEG (119 aa)). The interval 416–638 (KSGNVAKYDH…EEKKSKKSKK (223 aa)) is disordered. Composition is skewed to basic and acidic residues over residues 437–458 (VATK…KMEE), 485–521 (KKEE…EKKE), 527–574 (EKKE…EKKD), and 580–632 (EKKE…EEKK).

This sequence belongs to the NOP5/NOP56 family.

The protein localises to the nucleus. Its subcellular location is the nucleolus. Its function is as follows. Involved in the biogenesis of box C/D snoRNAs. Part of the small subunit (SSU) processome, first precursor of the small eukaryotic ribosomal subunit. Could function in the small subunit (SSU) processome, first precursor of the small eukaryotic ribosomal subunit. During the assembly of the SSU processome in the nucleolus, many ribosome biogenesis factors, an RNA chaperone and ribosomal proteins associate with the nascent pre-rRNA and work in concert to generate RNA folding, modifications, rearrangements and cleavage as well as targeted degradation of pre-ribosomal RNA by the RNA exosome. As a component of box C/D small nucleolar ribonucleoprotein (snoRNP) complexes could function in methylation of ribosomal RNAs (rRNAs). The polypeptide is Nucleolar protein 58 (nop58) (Dictyostelium discoideum (Social amoeba)).